Consider the following 305-residue polypeptide: Serine/threonine-protein phosphatase PP-X isozyme 1 (305 aa).

Residues Asp51, His53, Asp79, and Asn111 each coordinate Mn(2+). Catalysis depends on His112, which acts as the Proton donor. Mn(2+)-binding residues include His161 and His236.

It belongs to the PPP phosphatase family. PP-4 (PP-X) subfamily. In terms of assembly, interacts with TAP46. It depends on Mn(2+) as a cofactor. In terms of tissue distribution, ubiquitous, mostly expressed in root mersitems, flowers, and vascular tissues.

The protein resides in the plastid stroma. It catalyses the reaction O-phospho-L-seryl-[protein] + H2O = L-seryl-[protein] + phosphate. The enzyme catalyses O-phospho-L-threonyl-[protein] + H2O = L-threonyl-[protein] + phosphate. This chain is Serine/threonine-protein phosphatase PP-X isozyme 1 (PPX1), found in Arabidopsis thaliana (Mouse-ear cress).